We begin with the raw amino-acid sequence, 333 residues long: C4-dicarboxylate-binding periplasmic protein DctP (333 aa).

A signal peptide spans 1–26 (MLTRRILGALVGATALSLALSVPALA).

This sequence belongs to the bacterial solute-binding protein 7 family. The complex comprises the extracytoplasmic solute receptor protein DctP, and the two transmembrane proteins DctQ and DctM.

It is found in the periplasm. Its function is as follows. Part of the tripartite ATP-independent periplasmic (TRAP) transport system DctPQM involved in C4-dicarboxylates uptake. Binds C4-dicarboxylates such as fumarate, succinate, L-malate and D-malate. This is C4-dicarboxylate-binding periplasmic protein DctP from Rhodobacter capsulatus (Rhodopseudomonas capsulata).